Here is a 540-residue protein sequence, read N- to C-terminus: Keratin, type II cytoskeletal 73 (540 aa).

The segment at 1 to 131 (MSRQFTYKSG…DPEIQKVRAQ (131 aa)) is head. The coil 1A stretch occupies residues 132 to 167 (EREQIKVLNNKFASFIDKVRFLEQQNQVLETKWELL). The 314-residue stretch at 132 to 445 (EREQIKVLNN…KLLEGEECRM (314 aa)) folds into the IF rod domain. The tract at residues 168 to 186 (QQLDLNNCKNNLEPILEGY) is linker 1. A coil 1B region spans residues 187–278 (ISNLRKQLET…CLYEGETAQI (92 aa)). Positions 279–302 (QSHISDTSIILSMDNNRNLDLDSI) are linker 12. Residues 303 to 441 (IAEVRAQYEE…ATYRKLLEGE (139 aa)) form a coil 2 region. The interval 442–540 (ECRMSGEYTN…LSSPTKKTMR (99 aa)) is tail. Residues 502 to 540 (SGNCSPRGEARTRLGSASEFRDSQGKTLALSSPTKKTMR) are disordered. Residues 526 to 540 (GKTLALSSPTKKTMR) show a composition bias toward polar residues.

This sequence belongs to the intermediate filament family. As to quaternary structure, heterotetramer of two type I and two type II keratins. In terms of tissue distribution, highly expressed in hair follicles from scalp. In hair, it is specifically present in the inner root sheath (IRS) of the hair follicle. Present in the IRS cuticle, but not in Henle or Huxley layers of the IRS. In the IRS cuticle, it is expressed between the lowermost bulb region of the cuticle and the region where Henle cells undergo abrupt terminal differentiation. Detected up to the uppermost cortex region where cuticle cells terminally differentiate (at protein level).

Functionally, has a role in hair formation. Specific component of keratin intermediate filaments in the inner root sheath (IRS) of the hair follicle. The sequence is that of Keratin, type II cytoskeletal 73 (KRT73) from Homo sapiens (Human).